The primary structure comprises 447 residues: GTPase Der (447 aa).

2 consecutive EngA-type G domains span residues 4–165 (QIIT…PEEE) and 180–357 (LQIV…KIWN). Residues 10–17 (GRPNVGKS), 57–61 (DTPGL), 119–122 (NKCE), 186–193 (GRPNAGKS), 233–237 (DTAGL), and 298–301 (NKWD) contribute to the GTP site. In terms of domain architecture, KH-like spans 358-443 (KKITTSKLNE…PIRFIYVKTK (86 aa)).

It belongs to the TRAFAC class TrmE-Era-EngA-EngB-Septin-like GTPase superfamily. EngA (Der) GTPase family. As to quaternary structure, associates with the 50S ribosomal subunit.

In terms of biological role, GTPase that plays an essential role in the late steps of ribosome biogenesis. This is GTPase Der from Rickettsia peacockii (strain Rustic).